We begin with the raw amino-acid sequence, 738 residues long: YTH domain-containing protein 1 (738 aa).

Residues 1–12 (MAADSREEKDGE) are compositionally biased toward basic and acidic residues. The tract at residues 1–341 (MAADSREEKD…KHEKLSSSVR (341 aa)) is disordered. Residue Ser-35 is modified to Phosphoserine. Positions 50 to 59 (ERMESIDTKR) are enriched in basic and acidic residues. Positions 63–90 (SIHSRQLISKPLSSSVSNNKRIVSTKGK) are enriched in polar residues. Positions 91 to 115 (SVTEYKNEEYQRSERNKRLDADRKI) are enriched in basic and acidic residues. Lys-96 is covalently cross-linked (Glycyl lysine isopeptide (Lys-Gly) (interchain with G-Cter in SUMO2)). Phosphoserine is present on residues Ser-118 and Ser-120. Positions 124 to 144 (EPYKSQPEKPCLRKRDSERRA) are enriched in basic and acidic residues. Ser-146 carries the post-translational modification Phosphoserine. Thr-148 bears the Phosphothreonine mark. 2 stretches are compositionally biased toward basic and acidic residues: residues 151–163 (GSERIGLEVDRRA) and 170–185 (SKEEGNSEEYGSDHET). The segment covering 186 to 197 (GSSASSEQGNNT) has biased composition (polar residues). Over residues 198–257 (ENEEEGGEEDVEEDEEVDEDGDDDEEVDEDAEEEEDEEEDEEEEDEEEEEEEEEEYEQDE) the composition is skewed to acidic residues. A compositionally biased stretch (basic and acidic residues) spans 258–273 (RDQKEEGNDYDTRSEA). Residues 283–292 (FTDGSVRSGS) are compositionally biased toward polar residues. Residues Ser-311, Ser-318, Ser-320, Ser-321, and Ser-323 each carry the phosphoserine modification. Low complexity predominate over residues 318–328 (SGSSASESYAG). Residues 358–495 (ARFFLIKSNN…ECGTQLCLLF (138 aa)) enclose the YTH domain. Residues 364–366 (KSN) and Trp-380 each bind RNA. Ser-427 bears the Phosphoserine mark. Residue Trp-431 participates in RNA binding. At Ser-438 the chain carries Phosphoserine. An RNA-binding site is contributed by Asp-479. Residues 512–526 (HKRRMHSQPRSRGRP) are compositionally biased toward basic residues. Disordered regions lie at residues 512–566 (HKRR…RPGY), 618–654 (GMPPYPGIEQPPHHPYYQHHAPPPQAHPPYSGHHPVP), and 680–738 (AVVS…RYRR). Residues 527–566 (SRREPVRDVGRRRPEDYDIHNSRKKPRIDYPPEFHQRPGY) are compositionally biased toward basic and acidic residues. Ser-548 bears the Phosphoserine mark. A compositionally biased stretch (basic and acidic residues) spans 690–738 (RERDRERERDRPRDNRRDRERDRGRDRERERERICDRDRDRGERGRYRR).

In terms of assembly, interacts with SRSF1. Interacts with SRSF2. Interacts with SRSF3. Interacts with SRSF7. Interacts with SRSF10. Interacts with CPSF6. Interacts with KHDRBS1/SAM68. Interacts with TRA2B. Interacts with KHDRBS3. Interacts with EMD. Interacts with RBMX. Interacts with ZCCHC8. In terms of processing, tyrosine phosphorylated. In terms of tissue distribution, ubiquitous.

The protein localises to the nucleus. Its subcellular location is the nucleus speckle. Its function is as follows. Regulator of alternative splicing that specifically recognizes and binds N6-methyladenosine (m6A)-containing RNAs. M6A is a modification present at internal sites of mRNAs and some non-coding RNAs and plays a role in the efficiency of mRNA splicing, processing and stability. Acts as a key regulator of exon-inclusion or exon-skipping during alternative splicing via interaction with mRNA splicing factors SRSF3 and SRSF10. Specifically binds m6A-containing mRNAs and promotes recruitment of SRSF3 to its mRNA-binding elements adjacent to m6A sites, leading to exon-inclusion during alternative splicing. In contrast, interaction with SRSF3 prevents interaction with SRSF10, a splicing factor that promotes exon skipping: this prevents SRSF10 from binding to its mRNA-binding sites close to m6A-containing regions, leading to inhibit exon skipping during alternative splicing. May also regulate alternative splice site selection. Also involved in nuclear export of m6A-containing mRNAs via interaction with SRSF3: interaction with SRSF3 facilitates m6A-containing mRNA-binding to both SRSF3 and NXF1, promoting mRNA nuclear export. Involved in S-adenosyl-L-methionine homeostasis by regulating expression of MAT2A transcripts, probably by binding m6A-containing MAT2A mRNAs. Also recognizes and binds m6A on other RNA molecules. Involved in random X inactivation mediated by Xist RNA: recognizes and binds m6A-containing Xist and promotes transcription repression activity of Xist. Also recognizes and binds m6A-containing single-stranded DNA. Involved in germline development: required for spermatogonial development in males and oocyte growth and maturation in females, probably via its role in alternative splicing. This chain is YTH domain-containing protein 1 (Ythdc1), found in Rattus norvegicus (Rat).